Consider the following 234-residue polypeptide: Protein SSP120 (234 aa).

Positions 1–22 (MRFLRGFVFSLAFTLYKVTATA) are cleaved as a signal peptide. EF-hand domains are found at residues 52 to 87 (LKDYTPETFFALHDIKKKGFLDENDILSLYGLNREE) and 108 to 143 (MAKRVVSLIMRLLDVDDNTKITKEEYLQFAKRGNKF). Threonine 212 is modified (phosphothreonine).

This chain is Protein SSP120 (SSP120), found in Saccharomyces cerevisiae (strain ATCC 204508 / S288c) (Baker's yeast).